Reading from the N-terminus, the 345-residue chain is L-threonine 3-dehydrogenase (345 aa).

C42 is a binding site for Zn(2+). Catalysis depends on charge relay system residues T44 and H47. The Zn(2+) site is built by H67, E68, C97, C100, C103, and C111. Residues I179, D199, R204, 266–268 (LGI), and 290–291 (IY) each bind NAD(+).

This sequence belongs to the zinc-containing alcohol dehydrogenase family. In terms of assembly, homotetramer. Requires Zn(2+) as cofactor.

It localises to the cytoplasm. It catalyses the reaction L-threonine + NAD(+) = (2S)-2-amino-3-oxobutanoate + NADH + H(+). Its pathway is amino-acid degradation; L-threonine degradation via oxydo-reductase pathway; glycine from L-threonine: step 1/2. Functionally, catalyzes the NAD(+)-dependent oxidation of L-threonine to 2-amino-3-ketobutyrate. The polypeptide is L-threonine 3-dehydrogenase (Rhizobium rhizogenes (strain K84 / ATCC BAA-868) (Agrobacterium radiobacter)).